Consider the following 368-residue polypeptide: Protein RecA (368 aa).

Residue 72–79 (GNESSGKT) coordinates ATP.

It belongs to the RecA family.

It localises to the cytoplasm. Functionally, can catalyze the hydrolysis of ATP in the presence of single-stranded DNA, the ATP-dependent uptake of single-stranded DNA by duplex DNA, and the ATP-dependent hybridization of homologous single-stranded DNAs. It interacts with LexA causing its activation and leading to its autocatalytic cleavage. The sequence is that of Protein RecA from Petrotoga mobilis (strain DSM 10674 / SJ95).